The following is a 697-amino-acid chain: Glycine--tRNA ligase beta subunit (697 aa).

Belongs to the class-II aminoacyl-tRNA synthetase family. As to quaternary structure, tetramer of two alpha and two beta subunits.

Its subcellular location is the cytoplasm. The catalysed reaction is tRNA(Gly) + glycine + ATP = glycyl-tRNA(Gly) + AMP + diphosphate. The sequence is that of Glycine--tRNA ligase beta subunit from Cereibacter sphaeroides (strain ATCC 17023 / DSM 158 / JCM 6121 / CCUG 31486 / LMG 2827 / NBRC 12203 / NCIMB 8253 / ATH 2.4.1.) (Rhodobacter sphaeroides).